The following is a 269-amino-acid chain: tRNA pseudouridine synthase A (269 aa).

Catalysis depends on D51, which acts as the Nucleophile. A substrate-binding site is contributed by Y109.

Belongs to the tRNA pseudouridine synthase TruA family. Homodimer.

It catalyses the reaction uridine(38/39/40) in tRNA = pseudouridine(38/39/40) in tRNA. Its function is as follows. Formation of pseudouridine at positions 38, 39 and 40 in the anticodon stem and loop of transfer RNAs. The chain is tRNA pseudouridine synthase A from Aeromonas hydrophila subsp. hydrophila (strain ATCC 7966 / DSM 30187 / BCRC 13018 / CCUG 14551 / JCM 1027 / KCTC 2358 / NCIMB 9240 / NCTC 8049).